We begin with the raw amino-acid sequence, 195 residues long: Myelin-associated neurite-outgrowth inhibitor (195 aa).

At 1-18 (MNPVYSPASSGVPYANPK) the chain is on the cytoplasmic side. A helical transmembrane segment spans residues 19-43 (GIGYPAGFPVGYAAAAPAYSPSMYP). The Extracellular portion of the chain corresponds to 44 to 143 (GANPAFPSGY…APPIPPPRPN (100 aa)). The chain crosses the membrane as a helical span at residues 144-163 (GVTMGMVGGTTMAMSAGTLL). Residues 164-195 (TTHSPTPVAPHPSMPTYRQPATPTYSYVPPQW) lie on the Cytoplasmic side of the membrane.

It belongs to the FAM168 family.

It localises to the cytoplasm. Its subcellular location is the perinuclear region. It is found in the cell membrane. The protein resides in the cell projection. The protein localises to the axon. In terms of biological role, inhibitor of neuronal axonal outgrowth. In Danio rerio (Zebrafish), this protein is Myelin-associated neurite-outgrowth inhibitor (fam168b).